The chain runs to 49 residues: Large ribosomal subunit protein bL33B (49 aa).

The protein belongs to the bacterial ribosomal protein bL33 family.

This Bacillus licheniformis (strain ATCC 14580 / DSM 13 / JCM 2505 / CCUG 7422 / NBRC 12200 / NCIMB 9375 / NCTC 10341 / NRRL NRS-1264 / Gibson 46) protein is Large ribosomal subunit protein bL33B.